The chain runs to 355 residues: MKSVVAMVAVQFIFAGMFILFKITVDDGTNLKVLVAYRLSFATIFMLPLALIFQRKKRPEFTWRLLLLAFVSGLLGAAIPNILYLPGMARTSATFSAASSIISPLITLVLGLVFRMETLRLGSNEGRAKLVGTLLGACGALVFVFYKGIEIHIWSTHVDLLKGSHTGRATTNHHVSILGVLMVLGSNVSTSLWLLLQAKIGKELGGLYWNTSLMNGVGSLVCVIIALCSDHDWEQWQLGWDINLLATLYSGIVVSGMVVPLVAWCIATKGPLFVTVFSPIRLVIVALIGSFALEEPLHLGSIIGAMIMVGGVYLVVWCKMKEKKSASTTSDHIETNKNNKELDLGNLSSVNRDVP.

Helical transmembrane passes span 4–24, 33–53, 65–85, 94–114, 134–154, 175–195, 207–227, 244–264, 272–292, and 297–317; these read VVAM…FKIT, VLVA…ALIF, LLLL…ILYL, TFSA…GLVF, LLGA…IHIW, VSIL…LWLL, LYWN…IIAL, LLAT…LVAW, LFVT…GSFA, and LHLG…LVVW. An EamA 1 domain is found at 12–142; it reads FIFAGMFILF…TLLGACGALV (131 aa). Residues 210 to 316 enclose the EamA 2 domain; sequence NTSLMNGVGS…IMVGGVYLVV (107 aa).

This sequence belongs to the drug/metabolite transporter (DMT) superfamily. Plant drug/metabolite exporter (P-DME) (TC 2.A.7.4) family.

Its subcellular location is the membrane. The chain is WAT1-related protein At1g25270 from Arabidopsis thaliana (Mouse-ear cress).